Consider the following 617-residue polypeptide: Vacuolar protein sorting-associated protein 33B (617 aa).

At alanine 2 the chain carries N-acetylalanine.

It belongs to the STXBP/unc-18/SEC1 family. Interacts with RAB11A and VIPAS39. Interacts with RAB25. Associates with adapter protein complex 3 (AP-3), clathrin:AP-3 and clathrin:HGS complexes. As to quaternary structure, (Microbial infection) Interacts with M.tuberculosis PtpA. Phosphorylated on tyrosine residues. In terms of processing, (Microbial infection) Dephosphorylated by M.tuberculosis PtpA, which induces the reduction of host phagolysosome fusion in M.tuberculosis-infected macrophages. As to expression, ubiquitous; highly expressed in testis and low expression in the lung.

It localises to the late endosome membrane. The protein localises to the lysosome membrane. The protein resides in the early endosome. It is found in the cytoplasmic vesicle. Its subcellular location is the clathrin-coated vesicle. It localises to the recycling endosome. May play a role in vesicle-mediated protein trafficking to lysosomal compartments and in membrane docking/fusion reactions of late endosomes/lysosomes. Required for proper trafficking and targeting of the collagen-modifying enzyme lysyl hydroxylase 3 (LH3) to intracellular collagen. Mediates phagolysosomal fusion in macrophages. Proposed to be involved in endosomal maturation implicating VIPAS39. In epithelial cells, the VPS33B:VIPAS39 complex may play a role in the apical recycling pathway and in the maintenance of the apical-basolateral polarity. Seems to be involved in the sorting of specific cargos from the trans-Golgi network to alpha-granule-destined multivesicular bodies (MVBs) promoting MVBs maturation in megakaryocytes. In Homo sapiens (Human), this protein is Vacuolar protein sorting-associated protein 33B (VPS33B).